The following is a 346-amino-acid chain: [LysW]-lysine/[LysW]-ornithine hydrolase (346 aa).

A Zn(2+)-binding site is contributed by histidine 68. Aspartate 70 is an active-site residue. Aspartate 92 is a Zn(2+) binding site. The Proton acceptor role is filled by glutamate 122. 3 residues coordinate Zn(2+): glutamate 123, glutamate 146, and histidine 317.

It belongs to the peptidase M20A family. LysK subfamily. Zn(2+) is required as a cofactor. Requires Co(2+) as cofactor.

The protein resides in the cytoplasm. It carries out the reaction [amino-group carrier protein]-C-terminal-gamma-(L-lysyl)-L-glutamate + H2O = [amino-group carrier protein]-C-terminal-L-glutamate + L-lysine. It catalyses the reaction [amino-group carrier protein]-C-terminal-gamma-(L-ornithyl)-L-glutamate + H2O = [amino-group carrier protein]-C-terminal-L-glutamate + L-ornithine. It functions in the pathway amino-acid biosynthesis; L-lysine biosynthesis via AAA pathway; L-lysine from L-alpha-aminoadipate (Thermus route): step 5/5. The protein operates within amino-acid biosynthesis; L-arginine biosynthesis. In terms of biological role, catalyzes the release of L-lysine from [LysW]-gamma-L-lysine and the release of L-ornithine from [LysW]-L-ornithine. The chain is [LysW]-lysine/[LysW]-ornithine hydrolase from Saccharolobus islandicus (strain M.16.4 / Kamchatka #3) (Sulfolobus islandicus).